The primary structure comprises 360 residues: Mannose-1-phosphate guanylyltransferase catalytic subunit beta (360 aa).

The segment at 2 to 222 is substrate-binding domain; sequence KALILVGGYG…QGFWMDIGQP (221 aa). Asp-110 contacts GDP-alpha-D-mannose. Position 110 (Asp-110) interacts with Mg(2+). The active site involves Lys-162. Asp-218 lines the GDP-alpha-D-mannose pocket. Asp-218 is a Mg(2+) binding site. A hexapeptide repeat domain region spans residues 245 to 360; the sequence is RAGPGFLGNV…DSVPEPRIIM (116 aa).

It belongs to the transferase hexapeptide repeat family. As to quaternary structure, component of the GMPPA-GMPPB mannose-1-phosphate guanylyltransferase complex composed of 4 gmppa subunits and 8 gmppb subunits; the complex is organized into three layers, a central layer made up of 2 gmppa dimers sandwiched between two layers each made up of 2 gmppb dimers. Catalytic activity of gmppb is reduced when part of the complex and binding of GDP-alpha-D-Mannose by gmppa induces allosteric feedback inhibition of gmppb. It depends on Mg(2+) as a cofactor.

The enzyme catalyses alpha-D-mannose 1-phosphate + GTP + H(+) = GDP-alpha-D-mannose + diphosphate. It functions in the pathway nucleotide-sugar biosynthesis; GDP-alpha-D-mannose biosynthesis; GDP-alpha-D-mannose from alpha-D-mannose 1-phosphate (GTP route): step 1/1. Its activity is regulated as follows. Enzyme activity is reduced by incorporation into the GMPPA-GMPPB mannose-1-phosphate guanylyltransferase complex. Allosterically inhibited, when part of the GMPPA-GMPPB complex, by GDP-alpha-D-mannose binding to GMPPA. Functionally, catalytic subunit of the GMPPA-GMPPB mannose-1-phosphate guanylyltransferase complex. Catalyzes the formation of GDP-mannose, an essential precursor of glycan moieties of glycoproteins and glycolipids. Can catalyze the reverse reaction in vitro. Together with GMPPA regulates GDP-alpha-D-mannose levels. The polypeptide is Mannose-1-phosphate guanylyltransferase catalytic subunit beta (gmppb) (Danio rerio (Zebrafish)).